A 278-amino-acid chain; its full sequence is Tryptophan synthase alpha chain (278 aa).

Active-site proton acceptor residues include E61 and D72.

It belongs to the TrpA family. Tetramer of two alpha and two beta chains.

It carries out the reaction (1S,2R)-1-C-(indol-3-yl)glycerol 3-phosphate + L-serine = D-glyceraldehyde 3-phosphate + L-tryptophan + H2O. It participates in amino-acid biosynthesis; L-tryptophan biosynthesis; L-tryptophan from chorismate: step 5/5. The alpha subunit is responsible for the aldol cleavage of indoleglycerol phosphate to indole and glyceraldehyde 3-phosphate. This Shewanella oneidensis (strain ATCC 700550 / JCM 31522 / CIP 106686 / LMG 19005 / NCIMB 14063 / MR-1) protein is Tryptophan synthase alpha chain.